The sequence spans 56 residues: MPQDQQRKKQFDPNPNRDDSQRKTPVDKEIDDIIDEADEIVKRNKEQAKKKQPSRQ.

A compositionally biased stretch (basic and acidic residues) spans 1 to 28 (MPQDQQRKKQFDPNPNRDDSQRKTPVDK). Residues 1–33 (MPQDQQRKKQFDPNPNRDDSQRKTPVDKEIDDI) form a disordered region. Gln56 carries the deamidated glutamine modification. An Isoglutamyl lysine isopeptide (Gln-Lys) (interchain with K-? in acceptor proteins) cross-link involves residue Gln56.

This sequence belongs to the ubiquitin-like protein UBact family. May be modified by deamidation of its C-terminal glutamine to glutamate by the adjacently encoded deamidase. This could be a prerequisite to the subsequent conjugation, as shown in the other prokaryotic ubiquitin-like protein Pup.

In terms of biological role, may function as a protein modifier covalently attached to lysine residues of substrate proteins. This may serve to target the modified proteins for degradation by proteasomes. The polypeptide is Prokaryotic ubiquitin-like protein UBact (Yanofskybacteria sp. (strain GW2011_GWA1_39_13)).